Consider the following 124-residue polypeptide: MLVIFLGILGLLANQVLGLPTQAGGHLRSTDNPPQEELGYWCTYMESCKFCWECAHGICKNKVNESMPLIIENSYLTSCEVSRWYNQCTYSEGNGHYHVMDCSNPVPHNRPHRLGRKIYEKEDL.

The signal sequence occupies residues 1-28; sequence MLVIFLGILGLLANQVLGLPTQAGGHLR. Asn64 carries N-linked (GlcNAc...) asparagine; by host glycosylation. Residues 121 to 124 carry the Prevents secretion from ER motif; that stretch reads KEDL.

This sequence belongs to the asfivirus MGF 110 family.

It localises to the virion. The protein localises to the host endoplasmic reticulum-Golgi intermediate compartment. Its function is as follows. Causes the redistribution of lumenal ER protein to an enlarged ERGIC compartment. This is Protein MGF 110-4L from African swine fever virus (strain Badajoz 1971 Vero-adapted) (Ba71V).